The sequence spans 71 residues: Large ribosomal subunit protein bL31 (71 aa).

Residues Cys-16, Cys-18, Cys-38, and Cys-41 each contribute to the Zn(2+) site.

The protein belongs to the bacterial ribosomal protein bL31 family. Type A subfamily. As to quaternary structure, part of the 50S ribosomal subunit. Zn(2+) is required as a cofactor.

In terms of biological role, binds the 23S rRNA. The sequence is that of Large ribosomal subunit protein bL31 from Francisella tularensis subsp. novicida (strain U112).